Reading from the N-terminus, the 215-residue chain is uncharacterized protein (215 aa).

This is an uncharacterized protein from Acanthamoeba polyphaga mimivirus (APMV).